The chain runs to 446 residues: N-succinylarginine dihydrolase (446 aa).

Residues 19–28, asparagine 110, and 137–138 each bind substrate; these read AGLSFGNVAS and HR. Glutamate 174 is a catalytic residue. Residue arginine 213 participates in substrate binding. The active site involves histidine 249. Substrate is bound by residues aspartate 251 and asparagine 364. Catalysis depends on cysteine 370, which acts as the Nucleophile.

It belongs to the succinylarginine dihydrolase family. In terms of assembly, homodimer.

It catalyses the reaction N(2)-succinyl-L-arginine + 2 H2O + 2 H(+) = N(2)-succinyl-L-ornithine + 2 NH4(+) + CO2. Its pathway is amino-acid degradation; L-arginine degradation via AST pathway; L-glutamate and succinate from L-arginine: step 2/5. Its function is as follows. Catalyzes the hydrolysis of N(2)-succinylarginine into N(2)-succinylornithine, ammonia and CO(2). This is N-succinylarginine dihydrolase from Burkholderia cenocepacia (strain ATCC BAA-245 / DSM 16553 / LMG 16656 / NCTC 13227 / J2315 / CF5610) (Burkholderia cepacia (strain J2315)).